A 443-amino-acid chain; its full sequence is Histidinol dehydrogenase (443 aa).

NAD(+) contacts are provided by tyrosine 141, glutamine 203, and asparagine 226. Substrate contacts are provided by serine 249, glutamine 271, and histidine 274. Residues glutamine 271 and histidine 274 each contribute to the Zn(2+) site. Residues glutamate 339 and histidine 340 each act as proton acceptor in the active site. 4 residues coordinate substrate: histidine 340, aspartate 373, glutamate 427, and histidine 432. Aspartate 373 is a binding site for Zn(2+). Histidine 432 provides a ligand contact to Zn(2+).

It belongs to the histidinol dehydrogenase family. It depends on Zn(2+) as a cofactor.

The enzyme catalyses L-histidinol + 2 NAD(+) + H2O = L-histidine + 2 NADH + 3 H(+). The protein operates within amino-acid biosynthesis; L-histidine biosynthesis; L-histidine from 5-phospho-alpha-D-ribose 1-diphosphate: step 9/9. In terms of biological role, catalyzes the sequential NAD-dependent oxidations of L-histidinol to L-histidinaldehyde and then to L-histidine. This is Histidinol dehydrogenase from Chlorobium luteolum (strain DSM 273 / BCRC 81028 / 2530) (Pelodictyon luteolum).